An 866-amino-acid polypeptide reads, in one-letter code: Primer-independent DNA polymerase PolB (866 aa).

The tract at residues 50 to 286 (SDLTLHIGFD…DRVPATIGAM (237 aa)) is exonuclease domain. The palm1 domain stretch occupies residues 287–385 (AVSRFTKTLK…GLLDILTPDY (99 aa)). A TPR1 domain region spans residues 386–481 (GNIRLSKNPD…NSESTSVFLP (96 aa)). The tract at residues 482–522 (FVQQVRENRNRHIKGSLEEKFWKEIGNSLYGKLAQGLRAKT) is fingers domain. The interval 523-549 (AFDTARGLNRSLPPSSVTQPFFAAHVT) is TPR2 domain. Positions 550 to 678 (GFIRAVVGEL…PGQTLSRSTL (129 aa)) are palm2 domain. The interval 679–866 (ISTREMWLSE…RKYPTFCLPV (188 aa)) is thumb domain.

Requires Mn(2+) as cofactor.

The enzyme catalyses DNA(n) + a 2'-deoxyribonucleoside 5'-triphosphate = DNA(n+1) + diphosphate. Functionally, DNA polymerase with primer-independent templated DNA polymerization activity, primer-dependent DNA polymerization activity with strand displacement, translesion synthesis activity across non-bulky base damage, 3'-5' exodeoxyribonuclease activity, and de novo primer synthesis activity. The enzyme is processive and faithful. Translation synthesis across abasic sites is coupled to de novo primer synthesis. Overexpression of wild-type protein increases survival of cells upon mitomycin C or UV treatment. This chain is Primer-independent DNA polymerase PolB (pi-polB), found in Escherichia coli.